A 476-amino-acid chain; its full sequence is Bifunctional protein HldE (476 aa).

Residues 1–319 (MKVSLPAFEK…EALALHHGES (319 aa)) form a ribokinase region. Residue 195–198 (NMSE) participates in ATP binding. Residue Asp-264 is part of the active site. The tract at residues 345–476 (MTNGCFDILH…AIIQNIMAKQ (132 aa)) is cytidylyltransferase.

This sequence in the N-terminal section; belongs to the carbohydrate kinase PfkB family. It in the C-terminal section; belongs to the cytidylyltransferase family. Homodimer.

The catalysed reaction is D-glycero-beta-D-manno-heptose 7-phosphate + ATP = D-glycero-beta-D-manno-heptose 1,7-bisphosphate + ADP + H(+). It carries out the reaction D-glycero-beta-D-manno-heptose 1-phosphate + ATP + H(+) = ADP-D-glycero-beta-D-manno-heptose + diphosphate. It functions in the pathway nucleotide-sugar biosynthesis; ADP-L-glycero-beta-D-manno-heptose biosynthesis; ADP-L-glycero-beta-D-manno-heptose from D-glycero-beta-D-manno-heptose 7-phosphate: step 1/4. The protein operates within nucleotide-sugar biosynthesis; ADP-L-glycero-beta-D-manno-heptose biosynthesis; ADP-L-glycero-beta-D-manno-heptose from D-glycero-beta-D-manno-heptose 7-phosphate: step 3/4. In terms of biological role, catalyzes the phosphorylation of D-glycero-D-manno-heptose 7-phosphate at the C-1 position to selectively form D-glycero-beta-D-manno-heptose-1,7-bisphosphate. Catalyzes the ADP transfer from ATP to D-glycero-beta-D-manno-heptose 1-phosphate, yielding ADP-D-glycero-beta-D-manno-heptose. The protein is Bifunctional protein HldE of Shewanella sp. (strain MR-4).